Consider the following 242-residue polypeptide: Probable transcriptional regulatory protein Bmul_0984/BMULJ_02280 (242 aa).

The protein belongs to the TACO1 family.

Its subcellular location is the cytoplasm. The protein is Probable transcriptional regulatory protein Bmul_0984/BMULJ_02280 of Burkholderia multivorans (strain ATCC 17616 / 249).